Consider the following 485-residue polypeptide: Rop guanine nucleotide exchange factor 2 (485 aa).

Positions 1–36 (MENLPNHEENDDVGYHQSPGPIDPNDHSASETPVYS) are disordered. One can recognise a PRONE domain in the interval 107 to 485 (LAVQEISEPE…YVDKTMRGEE (379 aa)).

Interacts with ARC10/ROP11. As to expression, expressed in the vascular tissues of roots, leaves, sepals, petals and siliques.

Its function is as follows. Guanine-nucleotide exchange factor (GEF) that acts as an activator of Rop (Rho of plants) GTPases by promoting the exchange of GDP for GTP. This Arabidopsis thaliana (Mouse-ear cress) protein is Rop guanine nucleotide exchange factor 2 (ROPGEF2).